We begin with the raw amino-acid sequence, 477 residues long: Cytochrome P450 708A2 (477 aa).

The helical transmembrane segment at 3–23 threads the bilayer; sequence FVWSAAVWVIAVAAVVISKWL. Position 426 (C426) interacts with heme.

Belongs to the cytochrome P450 family. The cofactor is heme. In terms of tissue distribution, expressed primarily in the root epidermis.

The protein resides in the membrane. Its function is as follows. Hydroxylates thalianol into thalian-diol. The protein is Cytochrome P450 708A2 (CYP708A2) of Arabidopsis thaliana (Mouse-ear cress).